The primary structure comprises 406 residues: Serine/threonine transporter SstT (406 aa).

A run of 9 helical transmembrane segments spans residues Leu15–Ser35, Phe47–Ile67, Ile81–Phe101, Ala140–Leu160, Phe191–Gly211, Leu215–Val235, Ile289–Leu309, Met315–Ala335, and Ile362–Thr382.

The protein belongs to the dicarboxylate/amino acid:cation symporter (DAACS) (TC 2.A.23) family.

It is found in the cell inner membrane. It carries out the reaction L-serine(in) + Na(+)(in) = L-serine(out) + Na(+)(out). The catalysed reaction is L-threonine(in) + Na(+)(in) = L-threonine(out) + Na(+)(out). Its function is as follows. Involved in the import of serine and threonine into the cell, with the concomitant import of sodium (symport system). The polypeptide is Serine/threonine transporter SstT (Vibrio vulnificus (strain YJ016)).